The sequence spans 580 residues: MKVLLRCQRLRFIWLAKPAGRHFHRDPQLWAPLTLDDFEAINRCEKPLPKNFNFAADVLDQWSLKEKSGERPANPALWWVNGKGDEVKWSFQELGSLSRKAANVLTKPCGLQRGDRVAVILPRIPEWWLINVACMRTGLVFMPGTIQLTRKDILYRLQASKAKCIVASEEVAPAVDSIASECPNLKTKLLVSPHRWDGWLSFQELLQSASEEHNCVQTGSQEPMAIYFTSGTTGSPKMAQHSQSSLGIGYALCGRYWLDLTSSDIMWNMSDTGWIKAAIGSVFSTWLRGACVFVHRMAQFNTDTFLDTLTSYPITTLCSAPTVYRMLVQQDLKRYQFKRLRHCLTGGEPLNPEVLEQWKAQTGLELYEGYGQTEVGIICANRKGEEIKPGSMGKGVVPYDVQIIDEHGNILPSGKEGEIALRLGSDRPFCFFSEYVDNPEKTDATIRRNFYITGDRGVMDDDGYLWFVGRADDVIISSGYRIGPFEVESALIEHPAVVESAVVSSPDPIRGEVVKAFIVLAAPFKSSNREKLTAELQDHVKNSTAPYKYPRKVEFVQELPKTITGKIKRNVLRDQEWGRA.

Residues 1 to 22 (MKVLLRCQRLRFIWLAKPAGRH) constitute a mitochondrion transit peptide. ATP is bound by residues 229–237 (TSGTTGSPK), 368–373 (EGYGQT), D455, R470, and K566.

The protein belongs to the ATP-dependent AMP-binding enzyme family. Mg(2+) is required as a cofactor. It depends on Mn(2+) as a cofactor. As to expression, detected in adult olfactory epithelium.

It localises to the mitochondrion. It catalyses the reaction a medium-chain fatty acid + ATP + CoA = a medium-chain fatty acyl-CoA + AMP + diphosphate. It carries out the reaction hexanoate + ATP + CoA = hexanoyl-CoA + AMP + diphosphate. The enzyme catalyses octanoate + ATP + CoA = octanoyl-CoA + AMP + diphosphate. The catalysed reaction is decanoate + ATP + CoA = decanoyl-CoA + AMP + diphosphate. It catalyses the reaction dodecanoate + ATP + CoA = dodecanoyl-CoA + AMP + diphosphate. Its function is as follows. Catalyzes the activation of fatty acids by CoA to produce an acyl-CoA, the first step in fatty acid metabolism. Capable of activating medium-chain fatty acids with a preference for C6-12 fatty acids. The protein is Acyl-coenzyme A synthetase ACSM4, mitochondrial (Acsm4) of Rattus norvegicus (Rat).